The primary structure comprises 838 residues: Protein translocase subunit SecA (838 aa).

ATP is bound by residues glutamine 86, 104–108 (GEGKT), and aspartate 493. Disordered regions lie at residues 517-536 (RRIDNQLRGRSGRQGDPGSS) and 789-838 (KVAE…CCGQ). Basic and acidic residues predominate over residues 801–819 (TDGDSKAKRQPVRKKETVG). Cysteine 824, cysteine 826, cysteine 835, and cysteine 836 together coordinate Zn(2+).

The protein belongs to the SecA family. In terms of assembly, monomer and homodimer. Part of the essential Sec protein translocation apparatus which comprises SecA, SecYEG and auxiliary proteins SecDF. Other proteins may also be involved. Zn(2+) serves as cofactor.

The protein resides in the cell membrane. Its subcellular location is the cytoplasm. The catalysed reaction is ATP + H2O + cellular proteinSide 1 = ADP + phosphate + cellular proteinSide 2.. Part of the Sec protein translocase complex. Interacts with the SecYEG preprotein conducting channel. Has a central role in coupling the hydrolysis of ATP to the transfer of proteins into and across the cell membrane, serving as an ATP-driven molecular motor driving the stepwise translocation of polypeptide chains across the membrane. This Halalkalibacterium halodurans (strain ATCC BAA-125 / DSM 18197 / FERM 7344 / JCM 9153 / C-125) (Bacillus halodurans) protein is Protein translocase subunit SecA.